The following is a 257-amino-acid chain: Protein patched homolog 1 (257 aa).

Topologically, residues 1–199 (AKLQTGTAYL…LDDILKSFSD (199 aa)) are extracellular. N-linked (GlcNAc...) asparagine glycans are attached at residues N75, N114, and N177. Residues 200–220 (ISVIRVASGYLLMLAYACLTM) traverse the membrane as a helical segment. An SSD domain is found at 201–257 (SVIRVASGYLLMLAYACLTMLRWDCAKSQGAVGLAGVLLVALSVAAGLGLCSLIGIS). The Cytoplasmic segment spans residues 221–235 (LRWDCAKSQGAVGLA). The helical transmembrane segment at 236 to 256 (GVLLVALSVAAGLGLCSLIGI) threads the bilayer.

The protein belongs to the patched family. In terms of processing, glycosylation is necessary for SHH binding. In the eye, detected in neural retina, iris, retinal pigment epithelium, but not in lens.

Its subcellular location is the membrane. In terms of biological role, acts as a receptor for sonic hedgehog (SHH), indian hedgehog (IHH) and desert hedgehog (DHH). Associates with the smoothened protein (SMO) to transduce the hedgehog's proteins signal. The protein is Protein patched homolog 1 (PTC1) of Cynops pyrrhogaster (Japanese fire-bellied newt).